A 475-amino-acid polypeptide reads, in one-letter code: Aspartate ammonia-lyase (475 aa).

L-aspartate-binding residues include Thr-104, Ser-143, Thr-144, Asn-145, Thr-190, and His-191. The tract at residues 320–329 is SS loop; that stretch reads GSSIMPGKVN. The active-site Proton acceptor is Ser-321. Residues Ser-322 and Lys-327 each coordinate L-aspartate.

This sequence belongs to the class-II fumarase/aspartase family. Aspartase subfamily. In terms of assembly, homotetramer.

It carries out the reaction L-aspartate = fumarate + NH4(+). Its function is as follows. Catalyzes the reversible conversion of L-aspartate to fumarate and ammonia. This Bacillus subtilis (strain 168) protein is Aspartate ammonia-lyase.